The following is a 45-amino-acid chain: Cytochrome b559 subunit beta (45 aa).

A helical transmembrane segment spans residues 20–36 (WLAVHTLGVPTVFFLGA). His-24 contacts heme.

It belongs to the PsbE/PsbF family. Heterodimer of an alpha subunit and a beta subunit. PSII is composed of 1 copy each of membrane proteins PsbA, PsbB, PsbC, PsbD, PsbE, PsbF, PsbH, PsbI, PsbJ, PsbK, PsbL, PsbM, PsbT, PsbX, PsbY, PsbZ, Psb30/Ycf12, peripheral proteins PsbO, CyanoQ (PsbQ), PsbU, PsbV and a large number of cofactors. It forms dimeric complexes. Requires heme b as cofactor.

Its subcellular location is the cellular thylakoid membrane. In terms of biological role, this b-type cytochrome is tightly associated with the reaction center of photosystem II (PSII). PSII is a light-driven water:plastoquinone oxidoreductase that uses light energy to abstract electrons from H(2)O, generating O(2) and a proton gradient subsequently used for ATP formation. It consists of a core antenna complex that captures photons, and an electron transfer chain that converts photonic excitation into a charge separation. This Nostoc punctiforme (strain ATCC 29133 / PCC 73102) protein is Cytochrome b559 subunit beta.